Here is a 188-residue protein sequence, read N- to C-terminus: FMN-dependent NADPH-azoreductase (188 aa).

It belongs to the azoreductase type 2 family. In terms of assembly, homotetramer. FMN serves as cofactor.

Its function is as follows. Catalyzes the reductive cleavage of azo bond in aromatic azo compounds to the corresponding amines. Requires NADPH, but not NADH, as an electron donor for its activity. This is FMN-dependent NADPH-azoreductase (azo1) from Staphylococcus haemolyticus (strain JCSC1435).